Here is a 199-residue protein sequence, read N- to C-terminus: Recombination protein RecR (199 aa).

A C4-type zinc finger spans residues 56–71 (CRSCFNVAQSELCRIC). The 96-residue stretch at 79–174 (ALICVVEEPK…RVTRLASGLP (96 aa)) folds into the Toprim domain.

The protein belongs to the RecR family.

Functionally, may play a role in DNA repair. It seems to be involved in an RecBC-independent recombinational process of DNA repair. It may act with RecF and RecO. The sequence is that of Recombination protein RecR from Frankia alni (strain DSM 45986 / CECT 9034 / ACN14a).